Here is a 199-residue protein sequence, read N- to C-terminus: Thymidine kinase (199 aa).

ATP contacts are provided by residues 9-16 and 93-96; these read GAMSSGKS and DEAQ. Glu94 (proton acceptor) is an active-site residue. Cys151, Cys154, Cys188, and His191 together coordinate Zn(2+).

This sequence belongs to the thymidine kinase family. As to quaternary structure, homotetramer.

It localises to the cytoplasm. It catalyses the reaction thymidine + ATP = dTMP + ADP + H(+). In Lactobacillus johnsonii (strain CNCM I-12250 / La1 / NCC 533), this protein is Thymidine kinase.